The sequence spans 214 residues: Heat shock 70 kDa protein cognate 1 (214 aa).

The protein belongs to the heat shock protein 70 family.

This chain is Heat shock 70 kDa protein cognate 1 (Hsc70-1), found in Drosophila simulans (Fruit fly).